A 210-amino-acid polypeptide reads, in one-letter code: Large ribosomal subunit protein uL3 (210 aa).

Positions 131–165 (GPMSHGSKYHRRVGSMGATTDPGRTFKGKKMPGRM) are disordered.

This sequence belongs to the universal ribosomal protein uL3 family. As to quaternary structure, part of the 50S ribosomal subunit. Forms a cluster with proteins L14 and L19.

One of the primary rRNA binding proteins, it binds directly near the 3'-end of the 23S rRNA, where it nucleates assembly of the 50S subunit. The protein is Large ribosomal subunit protein uL3 of Caldanaerobacter subterraneus subsp. tengcongensis (strain DSM 15242 / JCM 11007 / NBRC 100824 / MB4) (Thermoanaerobacter tengcongensis).